Here is a 287-residue protein sequence, read N- to C-terminus: T-cell ecto-ADP-ribosyltransferase 1 (287 aa).

A signal peptide spans 1–20 (MPSNNFKFFLTWWLTQQVTG). Cystine bridges form between Cys-41/Cys-246, Cys-80/Cys-201, and Cys-141/Cys-193. Residues 61 to 241 (EELKLEWEKA…ISLDSPKRKK (181 aa)) form the TR mART core domain. Residues Tyr-98 and Arg-146 each contribute to the NAD(+) site. Catalysis depends on residues Arg-146 and Ser-167. A glycan (N-linked (GlcNAc...) asparagine) is linked at Asn-171. Ser-202 serves as a coordination point for NAD(+). Glu-209 is an active-site residue. N-linked (GlcNAc...) asparagine glycosylation occurs at Asn-256. The GPI-anchor amidated serine moiety is linked to residue Ser-258. The propeptide at 259–287 (SLGSRESCVSLFLVVLLGLLVQQLTLAEP) is removed in mature form.

It belongs to the Arg-specific ADP-ribosyltransferase family. In terms of processing, it is proposed that in the absence of reducing agents, a disulfide bond is formed between Cys-80 and Cys-201, leading to a conformational change that reduces the catalytic rate of NAD glycohydrolysis. In terms of tissue distribution, expressed in spleen, intestine and thymus.

It localises to the cell membrane. The enzyme catalyses L-arginyl-[protein] + NAD(+) = N(omega)-(ADP-D-ribosyl)-L-arginyl-[protein] + nicotinamide + H(+). The catalysed reaction is NAD(+) + H2O = ADP-D-ribose + nicotinamide + H(+). Has both ADP-ribosyltransferase activity and thiol-dependent NAD(+) glycohydrolase activity. The chain is T-cell ecto-ADP-ribosyltransferase 1 (Art2a) from Mus musculus (Mouse).